We begin with the raw amino-acid sequence, 183 residues long: Interleukin-36 beta (183 aa).

Residues 1–30 constitute a propeptide that is removed on maturation; that stretch reads MMAFPPQSCVHVLPPKSIQMWEPNHNTMHG.

It belongs to the IL-1 family. In terms of assembly, interacts with cargo receptor TMED10; the interaction mediates the translocation from the cytoplasm into the ERGIC (endoplasmic reticulum-Golgi intermediate compartment) and thereby secretion. Post-translationally, N-terminal truncation leads to a dramatic enhancement of its activity (&gt;1000-fold).

It localises to the cytoplasm. The protein resides in the secreted. Cytokine that binds to and signals through the IL1RL2/IL-36R receptor which in turn activates NF-kappa-B and MAPK signaling pathways in target cells linked to a pro-inflammatory response. Part of the IL-36 signaling system that is thought to be present in epithelial barriers and to take part in local inflammatory response; similar to the IL-1 system with which it shares the coreceptor IL1RAP. Stimulates production of interleukin-6 and interleukin-8 in synovial fibrobasts, articular chondrocytes and mature adipocytes. Induces expression of a number of antimicrobial peptides including beta-defensin 4 and beta-defensin 103 as well as a number of matrix metalloproteases. Seems to be involved in skin inflammatory response by acting on keratinocytes, dendritic cells and indirectly on T-cells to drive tissue infiltration, cell maturation and cell proliferation. Induces the production of pro-inflammatory cytokines in bone marrow-derived dendritic cells (BMDCs), including IL-12, Il-1 beta, IL-6, TNF-alpha and IL-23, and activates p38 MAPK phosphorylation in BMDCs. Involved in dendritic cell maturation by stimulating the surface expression of CD80, CD86 and MHC class II. Induces the production of IFN-gamma, IL-4 and IL-17 by T-helper 1 (Th1) cells, cultured CD4(+) T-cells and splenocytes. This Mus musculus (Mouse) protein is Interleukin-36 beta.